Consider the following 198-residue polypeptide: Ribonuclease HII (198 aa).

One can recognise an RNase H type-2 domain in the interval 3–194 (RRVCGVDEAG…VKRCLALGQQ (192 aa)). Asp-9, Glu-10, and Asp-101 together coordinate a divalent metal cation.

The protein belongs to the RNase HII family. Requires Mn(2+) as cofactor. It depends on Mg(2+) as a cofactor.

Its subcellular location is the cytoplasm. It catalyses the reaction Endonucleolytic cleavage to 5'-phosphomonoester.. Endonuclease that specifically degrades the RNA of RNA-DNA hybrids. The chain is Ribonuclease HII from Laribacter hongkongensis (strain HLHK9).